The sequence spans 257 residues: Uroplakin-1a (257 aa).

Over M1–P13 the chain is Cytoplasmic. The chain crosses the membrane as a helical span at residues V14–F34. At A35–D58 the chain is on the extracellular side. Residues V59–L85 traverse the membrane as a helical segment. Topologically, residues C86 to Y90 are cytoplasmic. A helical transmembrane segment spans residues M91 to I111. Residues T112–T229 are Extracellular-facing. N169 carries N-linked (GlcNAc...) asparagine glycosylation. Residues W230–M251 form a helical membrane-spanning segment. The Cytoplasmic portion of the chain corresponds to Y252–L257.

The protein belongs to the tetraspanin (TM4SF) family. As to quaternary structure, homodimer; disulfide-linked. Interacts with uroplakin-2 (UPK2). Binds to uropathogenic E.coli fimH.

It localises to the membrane. Its function is as follows. Component of the asymmetric unit membrane (AUM); a highly specialized biomembrane elaborated by terminally differentiated urothelial cells. May play an important role in normal bladder epithelial physiology, possibly in regulating membrane permeability of superficial umbrella cells or in stabilizing the apical membrane through AUM/cytoskeletal interactions. The protein is Uroplakin-1a (Upk1a) of Mus musculus (Mouse).